The sequence spans 396 residues: S-adenosylmethionine synthase (396 aa).

His-16 serves as a coordination point for ATP. Mg(2+) is bound at residue Asp-18. A K(+)-binding site is contributed by Glu-44. Residues Glu-57 and Gln-100 each contribute to the L-methionine site. The tract at residues 100–110 (QSPDIAQGVDD) is flexible loop. ATP-binding positions include 174–176 (DAK), 241–242 (RF), Asp-250, 256–257 (RK), Ala-273, and Lys-277. L-methionine is bound at residue Asp-250. Position 281 (Lys-281) interacts with L-methionine.

Belongs to the AdoMet synthase family. In terms of assembly, homotetramer; dimer of dimers. The cofactor is Mg(2+). Requires K(+) as cofactor.

Its subcellular location is the cytoplasm. The catalysed reaction is L-methionine + ATP + H2O = S-adenosyl-L-methionine + phosphate + diphosphate. The protein operates within amino-acid biosynthesis; S-adenosyl-L-methionine biosynthesis; S-adenosyl-L-methionine from L-methionine: step 1/1. Catalyzes the formation of S-adenosylmethionine (AdoMet) from methionine and ATP. The overall synthetic reaction is composed of two sequential steps, AdoMet formation and the subsequent tripolyphosphate hydrolysis which occurs prior to release of AdoMet from the enzyme. The sequence is that of S-adenosylmethionine synthase from Pediococcus pentosaceus (strain ATCC 25745 / CCUG 21536 / LMG 10740 / 183-1w).